The primary structure comprises 142 residues: Metallothiol transferase FosB (142 aa).

Positions 5–120 constitute a VOC domain; that stretch reads SVNHICFSVS…DGHKIELHTG (116 aa). Residues His-8, His-67, and Glu-116 each contribute to the Mg(2+) site. Glu-116 (proton donor/acceptor) is an active-site residue.

The protein belongs to the fosfomycin resistance protein family. FosB subfamily. As to quaternary structure, homodimer. Mg(2+) is required as a cofactor.

It localises to the cytoplasm. Metallothiol transferase which confers resistance to fosfomycin by catalyzing the addition of a thiol cofactor to fosfomycin. L-cysteine is probably the physiological thiol donor. The chain is Metallothiol transferase FosB from Staphylococcus epidermidis (strain ATCC 12228 / FDA PCI 1200).